The primary structure comprises 680 residues: Glutamine-dependent NAD(+) synthetase (680 aa).

Positions 12–276 (VRVAACTHHA…EHRSVADVDT (265 aa)) constitute a CN hydrolase domain. Glutamate 52 serves as the catalytic Proton acceptor; for glutaminase activity. Lysine 121 functions as the For glutaminase activity in the catalytic mechanism. Tyrosine 127 is a binding site for L-glutamine. The active-site Nucleophile; for glutaminase activity is the cysteine 176. 2 residues coordinate L-glutamine: serine 203 and arginine 209. 366-373 (GVSGGLDS) contributes to the ATP binding site. Asparagine 456 contributes to the deamido-NAD(+) binding site. An ATP-binding site is contributed by threonine 480. Deamido-NAD(+) contacts are provided by residues glutamate 485, 490–493 (WSTY), and lysine 636.

It in the C-terminal section; belongs to the NAD synthetase family.

It carries out the reaction deamido-NAD(+) + L-glutamine + ATP + H2O = L-glutamate + AMP + diphosphate + NAD(+) + H(+). It functions in the pathway cofactor biosynthesis; NAD(+) biosynthesis; NAD(+) from deamido-NAD(+) (L-Gln route): step 1/1. In terms of biological role, catalyzes the ATP-dependent amidation of deamido-NAD to form NAD. Uses L-glutamine as a nitrogen source. This is Glutamine-dependent NAD(+) synthetase from Mycobacterium leprae (strain TN).